We begin with the raw amino-acid sequence, 120 residues long: MPRVKGGSVTRQRRKKIIKLAKGYRGAKHIQFKVAKQQVMKSYQYAFRDRRKTKSNFRKLWIARINAAARQNDISYSKLMHGLKLANVEVNRKMLADLAITDAAAFTALVDEAKKALAAE.

It belongs to the bacterial ribosomal protein bL20 family.

Binds directly to 23S ribosomal RNA and is necessary for the in vitro assembly process of the 50S ribosomal subunit. It is not involved in the protein synthesizing functions of that subunit. The protein is Large ribosomal subunit protein bL20 of Ligilactobacillus salivarius (strain UCC118) (Lactobacillus salivarius).